The sequence spans 390 residues: Alanine racemase (390 aa).

Residue K37 is the Proton acceptor; specific for D-alanine of the active site. K37 is modified (N6-(pyridoxal phosphate)lysine). Position 135 (R135) interacts with substrate. Y274 serves as the catalytic Proton acceptor; specific for L-alanine. M322 is a binding site for substrate.

It belongs to the alanine racemase family. The cofactor is pyridoxal 5'-phosphate.

It catalyses the reaction L-alanine = D-alanine. It participates in amino-acid biosynthesis; D-alanine biosynthesis; D-alanine from L-alanine: step 1/1. Its function is as follows. Catalyzes the interconversion of L-alanine and D-alanine. May also act on other amino acids. In Desulfosudis oleivorans (strain DSM 6200 / JCM 39069 / Hxd3) (Desulfococcus oleovorans), this protein is Alanine racemase (alr).